The sequence spans 126 residues: Bleomycin resistance protein (126 aa).

The VOC domain occupies 1-119 (MTDQATPNLP…DGTLLRLIQN (119 aa)).

It belongs to the bleomycin resistance protein family.

Its function is as follows. Binding protein with a strong affinity to the bleomycin family of antibiotics. Binds to CL990; an antimitotic-antibiotic compound. The protein is Bleomycin resistance protein (ble) of Klebsiella pneumoniae.